Reading from the N-terminus, the 122-residue chain is Large ribosomal subunit protein uL14 (122 aa).

It belongs to the universal ribosomal protein uL14 family. Part of the 50S ribosomal subunit. Forms a cluster with proteins L3 and L19. In the 70S ribosome, L14 and L19 interact and together make contacts with the 16S rRNA in bridges B5 and B8.

Its function is as follows. Binds to 23S rRNA. Forms part of two intersubunit bridges in the 70S ribosome. The protein is Large ribosomal subunit protein uL14 of Levilactobacillus brevis (strain ATCC 367 / BCRC 12310 / CIP 105137 / JCM 1170 / LMG 11437 / NCIMB 947 / NCTC 947) (Lactobacillus brevis).